We begin with the raw amino-acid sequence, 609 residues long: Acetyl-coenzyme A carboxylase carboxyl transferase subunits beta/alpha (609 aa).

The tract at residues 1-271 (MTLEATAIEA…QTAEFLLTHG (271 aa)) is acetyl-coenzyme A carboxylase carboxyl transferase subunit beta. In terms of domain architecture, CoA carboxyltransferase N-terminal spans 39-308 (SWLLCGGCGT…GIPRQAGRPD (270 aa)). The tract at residues 39 to 559 (SWLLCGGCGT…REALRGALAD (521 aa)) is carboxyltransferase. Positions 43, 46, 62, and 65 each coordinate Zn(2+). A C4-type zinc finger spans residues 43–65 (CGGCGTMLYERRFAREGRVCADC). The acetyl-coenzyme A carboxylase carboxyl transferase subunit alpha stretch occupies residues 272–582 (VVDLISPRRE…RARFRQFGVA (311 aa)). The 246-residue stretch at 314-559 (DPEQLARRDA…REALRGALAD (246 aa)) folds into the CoA carboxyltransferase C-terminal domain. Low complexity predominate over residues 582–592 (ATPAPATAPAA). Residues 582–609 (ATPAPATAPAASDDAHESQTDRSVEATR) are disordered. The segment covering 594 to 609 (DDAHESQTDRSVEATR) has biased composition (basic and acidic residues).

The protein in the N-terminal section; belongs to the AccD/PCCB family. It in the C-terminal section; belongs to the AccA family. As to quaternary structure, acetyl-CoA carboxylase is a heterotetramer composed of biotin carboxyl carrier protein (AccB), biotin carboxylase (AccC) and two subunits of ACCase subunit beta/alpha. It depends on Zn(2+) as a cofactor.

The protein localises to the cytoplasm. It catalyses the reaction N(6)-carboxybiotinyl-L-lysyl-[protein] + acetyl-CoA = N(6)-biotinyl-L-lysyl-[protein] + malonyl-CoA. Its pathway is lipid metabolism; malonyl-CoA biosynthesis; malonyl-CoA from acetyl-CoA: step 1/1. Functionally, component of the acetyl coenzyme A carboxylase (ACC) complex. Biotin carboxylase (BC) catalyzes the carboxylation of biotin on its carrier protein (BCCP) and then the CO(2) group is transferred by the transcarboxylase to acetyl-CoA to form malonyl-CoA. This chain is Acetyl-coenzyme A carboxylase carboxyl transferase subunits beta/alpha (accD), found in Frankia alni (strain DSM 45986 / CECT 9034 / ACN14a).